The following is an 872-amino-acid chain: Protein translocase subunit SecA (872 aa).

Residues glutamine 87, 105 to 109, and aspartate 510 each bind ATP; that span reads GEGKT. Residues cysteine 847, cysteine 849, cysteine 858, and cysteine 859 each contribute to the Zn(2+) site.

It belongs to the SecA family. Monomer and homodimer. Part of the essential Sec protein translocation apparatus which comprises SecA, SecYEG and auxiliary proteins SecDF-YajC and YidC. Requires Zn(2+) as cofactor.

The protein localises to the cell inner membrane. The protein resides in the cytoplasm. The enzyme catalyses ATP + H2O + cellular proteinSide 1 = ADP + phosphate + cellular proteinSide 2.. In terms of biological role, part of the Sec protein translocase complex. Interacts with the SecYEG preprotein conducting channel. Has a central role in coupling the hydrolysis of ATP to the transfer of proteins into and across the cell membrane, serving as an ATP-driven molecular motor driving the stepwise translocation of polypeptide chains across the membrane. The protein is Protein translocase subunit SecA of Aliarcobacter butzleri (strain RM4018) (Arcobacter butzleri).